The sequence spans 428 residues: Enolase (428 aa).

Gln162 is a binding site for (2R)-2-phosphoglycerate. Glu204 acts as the Proton donor in catalysis. Mg(2+) contacts are provided by Asp241, Glu283, and Asp310. Residues Lys335, Arg364, Ser365, and Lys386 each contribute to the (2R)-2-phosphoglycerate site. The Proton acceptor role is filled by Lys335.

This sequence belongs to the enolase family. Requires Mg(2+) as cofactor.

It localises to the cytoplasm. The protein localises to the secreted. Its subcellular location is the cell surface. It catalyses the reaction (2R)-2-phosphoglycerate = phosphoenolpyruvate + H2O. Its pathway is carbohydrate degradation; glycolysis; pyruvate from D-glyceraldehyde 3-phosphate: step 4/5. In terms of biological role, catalyzes the reversible conversion of 2-phosphoglycerate (2-PG) into phosphoenolpyruvate (PEP). It is essential for the degradation of carbohydrates via glycolysis. This chain is Enolase, found in Nocardia farcinica (strain IFM 10152).